Here is a 244-residue protein sequence, read N- to C-terminus: Large ribosomal subunit protein uL30 (244 aa).

Residues 1-37 are disordered; the sequence is MAPTKKVPQVPETVLKRRKQRADARTKAAQHKVTVAA.

Belongs to the universal ribosomal protein uL30 family.

Its function is as follows. Binds to G-rich structures in 28S rRNA and in mRNAs. Plays a regulatory role in the translation apparatus; inhibits cell-free translation of mRNAs. The polypeptide is Large ribosomal subunit protein uL30 (rpl-7) (Caenorhabditis elegans).